Here is a 291-residue protein sequence, read N- to C-terminus: ATP synthase gamma chain (291 aa).

It belongs to the ATPase gamma chain family. In terms of assembly, F-type ATPases have 2 components, CF(1) - the catalytic core - and CF(0) - the membrane proton channel. CF(1) has five subunits: alpha(3), beta(3), gamma(1), delta(1), epsilon(1). CF(0) has three main subunits: a, b and c.

It localises to the cell inner membrane. Produces ATP from ADP in the presence of a proton gradient across the membrane. The gamma chain is believed to be important in regulating ATPase activity and the flow of protons through the CF(0) complex. The sequence is that of ATP synthase gamma chain from Verminephrobacter eiseniae (strain EF01-2).